Here is a 341-residue protein sequence, read N- to C-terminus: 2-dehydro-3-deoxy-L-galactonate 5-dehydrogenase (341 aa).

Cys37 is a Zn(2+) binding site. Catalysis depends on charge relay system residues Thr39 and His42. Residues His60, Glu61, Cys90, Cys93, Cys96, and Cys104 each contribute to the Zn(2+) site.

It belongs to the zinc-containing alcohol dehydrogenase family. The cofactor is Zn(2+).

It catalyses the reaction 2-dehydro-3-deoxy-L-galactonate + NAD(+) = 3-deoxy-D-glycero-2,5-hexodiulosonate + NADH + H(+). Its function is as follows. Involved in the degradation of 3,6-anhydro-L-galactose, which is the major monomeric sugar of red macroalgae. Catalyzes the third step of the pathway, the NAD(+)-dependent oxidation of 2-dehydro-3-deoxy-L-galactonate (L-KDGal) to 3-deoxy-D-glycero-2,5-hexodiulosonate (L-DDGal). This is 2-dehydro-3-deoxy-L-galactonate 5-dehydrogenase from Pseudoalteromonas atlantica (strain T6c / ATCC BAA-1087).